Reading from the N-terminus, the 119-residue chain is Large ribosomal subunit protein uL18 (119 aa).

The protein belongs to the universal ribosomal protein uL18 family. In terms of assembly, part of the 50S ribosomal subunit; part of the 5S rRNA/L5/L18/L25 subcomplex. Contacts the 5S and 23S rRNAs.

Functionally, this is one of the proteins that bind and probably mediate the attachment of the 5S RNA into the large ribosomal subunit, where it forms part of the central protuberance. The chain is Large ribosomal subunit protein uL18 from Anaeromyxobacter sp. (strain Fw109-5).